The chain runs to 307 residues: Pantothenate kinase (307 aa).

Residue 90-97 (GSVAVGKS) coordinates ATP.

The protein belongs to the prokaryotic pantothenate kinase family.

It is found in the cytoplasm. The enzyme catalyses (R)-pantothenate + ATP = (R)-4'-phosphopantothenate + ADP + H(+). It functions in the pathway cofactor biosynthesis; coenzyme A biosynthesis; CoA from (R)-pantothenate: step 1/5. This chain is Pantothenate kinase, found in Enterococcus faecalis (strain ATCC 700802 / V583).